The following is a 264-amino-acid chain: Diphthine synthase (264 aa).

Residues leucine 10, aspartate 87, valine 90, 115 to 116 (SI), leucine 166, alanine 209, and histidine 234 contribute to the S-adenosyl-L-methionine site.

The protein belongs to the diphthine synthase family. As to quaternary structure, homodimer.

It catalyses the reaction 2-[(3S)-amino-3-carboxypropyl]-L-histidyl-[translation elongation factor 2] + 3 S-adenosyl-L-methionine = diphthine-[translation elongation factor 2] + 3 S-adenosyl-L-homocysteine + 3 H(+). Its pathway is protein modification; peptidyl-diphthamide biosynthesis. S-adenosyl-L-methionine-dependent methyltransferase that catalyzes the trimethylation of the amino group of the modified target histidine residue in translation elongation factor 2 (EF-2), to form an intermediate called diphthine. The three successive methylation reactions represent the second step of diphthamide biosynthesis. In Thermococcus onnurineus (strain NA1), this protein is Diphthine synthase.